The sequence spans 152 residues: uncharacterized protein (152 aa).

Belongs to the antirestriction protein family.

This is an uncharacterized protein from Escherichia coli (strain K12).